The chain runs to 51 residues: Cytochrome bd ubiquinol oxidase subunit X (51 aa).

Topologically, residues 1–3 (MWY) are cytoplasmic. The chain crosses the membrane as a helical span at residues 4 to 26 (FSWLLGLPLAAAFAVLNAMWYEL). The Periplasmic portion of the chain corresponds to 27 to 51 (MDDRARKRLAADPTAELALEGNKHH).

This sequence belongs to the cytochrome ubiquinol oxidase subunit X family. As to quaternary structure, may be a subunit of cytochrome ubiquinol oxidase.

The protein resides in the cell inner membrane. The enzyme catalyses 2 a ubiquinol + O2(in) + 4 H(+)(in) = 2 a ubiquinone + 2 H2O(in) + 4 H(+)(out). It functions in the pathway energy metabolism; oxidative phosphorylation. In terms of biological role, required for correct functioning of cytochrome bd oxidase. This chain is Cytochrome bd ubiquinol oxidase subunit X (cydX), found in Brucella abortus (strain 2308).